The following is a 375-amino-acid chain: Succinyl-diaminopimelate desuccinylase (375 aa).

Position 66 (histidine 66) interacts with Zn(2+). Aspartate 68 is a catalytic residue. Aspartate 99 lines the Zn(2+) pocket. Glutamate 133 functions as the Proton acceptor in the catalytic mechanism. 3 residues coordinate Zn(2+): glutamate 134, glutamate 162, and histidine 348.

The protein belongs to the peptidase M20A family. DapE subfamily. Homodimer. Zn(2+) serves as cofactor. The cofactor is Co(2+).

The enzyme catalyses N-succinyl-(2S,6S)-2,6-diaminopimelate + H2O = (2S,6S)-2,6-diaminopimelate + succinate. It functions in the pathway amino-acid biosynthesis; L-lysine biosynthesis via DAP pathway; LL-2,6-diaminopimelate from (S)-tetrahydrodipicolinate (succinylase route): step 3/3. Catalyzes the hydrolysis of N-succinyl-L,L-diaminopimelic acid (SDAP), forming succinate and LL-2,6-diaminopimelate (DAP), an intermediate involved in the bacterial biosynthesis of lysine and meso-diaminopimelic acid, an essential component of bacterial cell walls. This is Succinyl-diaminopimelate desuccinylase from Escherichia coli (strain SE11).